The chain runs to 168 residues: RNA pyrophosphohydrolase (168 aa).

The Nudix hydrolase domain occupies 8–159 (PYRTCVGVML…KRPVYERVVK (152 aa)). The Nudix box signature appears at 47–68 (GGVDPGEDTWKAAKRELYEETS).

This sequence belongs to the Nudix hydrolase family. RppH subfamily. The cofactor is a divalent metal cation.

Its function is as follows. Accelerates the degradation of transcripts by removing pyrophosphate from the 5'-end of triphosphorylated RNA, leading to a more labile monophosphorylated state that can stimulate subsequent ribonuclease cleavage. The chain is RNA pyrophosphohydrolase from Rhodopseudomonas palustris (strain ATCC BAA-98 / CGA009).